The following is a 210-amino-acid chain: Probable GTP-binding protein EngB (210 aa).

An EngB-type G domain is found at 22–198; sequence FLPEYAFIGR…LTYIDEVNQE (177 aa). GTP-binding positions include 30-37, 57-61, 75-78, 142-145, and 177-179; these read GRSNVGKS, GKTQL, DLPG, TKAD, and TSS. The Mg(2+) site is built by S37 and T59.

The protein belongs to the TRAFAC class TrmE-Era-EngA-EngB-Septin-like GTPase superfamily. EngB GTPase family. The cofactor is Mg(2+).

Its function is as follows. Necessary for normal cell division and for the maintenance of normal septation. This is Probable GTP-binding protein EngB from Flavobacterium johnsoniae (strain ATCC 17061 / DSM 2064 / JCM 8514 / BCRC 14874 / CCUG 350202 / NBRC 14942 / NCIMB 11054 / UW101) (Cytophaga johnsonae).